Reading from the N-terminus, the 551-residue chain is Glucose-6-phosphate isomerase (551 aa).

The Proton donor role is filled by glutamate 352. Catalysis depends on residues histidine 383 and lysine 511.

This sequence belongs to the GPI family.

The protein localises to the cytoplasm. The catalysed reaction is alpha-D-glucose 6-phosphate = beta-D-fructose 6-phosphate. It participates in carbohydrate biosynthesis; gluconeogenesis. It functions in the pathway carbohydrate degradation; glycolysis; D-glyceraldehyde 3-phosphate and glycerone phosphate from D-glucose: step 2/4. Functionally, catalyzes the reversible isomerization of glucose-6-phosphate to fructose-6-phosphate. This chain is Glucose-6-phosphate isomerase, found in Chlorobium luteolum (strain DSM 273 / BCRC 81028 / 2530) (Pelodictyon luteolum).